The chain runs to 444 residues: Xaa-Pro dipeptidase (444 aa).

Mn(2+) contacts are provided by Asp247, Asp258, His340, Glu385, and Glu424.

This sequence belongs to the peptidase M24B family. Bacterial-type prolidase subfamily. Requires Mn(2+) as cofactor.

The catalysed reaction is Xaa-L-Pro dipeptide + H2O = an L-alpha-amino acid + L-proline. Functionally, splits dipeptides with a prolyl residue in the C-terminal position. The polypeptide is Xaa-Pro dipeptidase (Photorhabdus laumondii subsp. laumondii (strain DSM 15139 / CIP 105565 / TT01) (Photorhabdus luminescens subsp. laumondii)).